Consider the following 203-residue polypeptide: Lectin (203 aa).

The signal sequence occupies residues M1–A20. The propeptide occupies R21–G53.

In terms of assembly, monomer.

Functionally, N-acetyl-D-glucosamine-specific lectin. Specifically agglutinates rabbit erythrocytes. The protein is Lectin (UPL1) of Ulva pertusa (Sea lettuce).